Reading from the N-terminus, the 124-residue chain is Large ribosomal subunit protein bL12 (124 aa).

The protein belongs to the bacterial ribosomal protein bL12 family. As to quaternary structure, homodimer. Part of the ribosomal stalk of the 50S ribosomal subunit. Forms a multimeric L10(L12)X complex, where L10 forms an elongated spine to which 2 to 4 L12 dimers bind in a sequential fashion. Binds GTP-bound translation factors.

Its function is as follows. Forms part of the ribosomal stalk which helps the ribosome interact with GTP-bound translation factors. Is thus essential for accurate translation. This chain is Large ribosomal subunit protein bL12, found in Leptothrix cholodnii (strain ATCC 51168 / LMG 8142 / SP-6) (Leptothrix discophora (strain SP-6)).